We begin with the raw amino-acid sequence, 608 residues long: Dolichyl-diphosphooligosaccharide--protein glycosyltransferase subunit 1 (608 aa).

The first 25 residues, 1–25 (MESPVALLLLLLLCLGALAPTPGSA), serve as a signal peptide directing secretion. Topologically, residues 26 to 440 (SSEAPPLVNE…FNKVLMLQEP (415 aa)) are lumenal. Residue lysine 188 is modified to N6-acetyllysine. The N-linked (GlcNAc...) asparagine glycan is linked to asparagine 300. A helical membrane pass occupies residues 441–458 (LLVVAAFYILFFTVIIYV). The Cytoplasmic portion of the chain corresponds to 459–608 (RLDFSITKDP…TKIDHILDAL (150 aa)). Position 539 is an N6-acetyllysine; alternate (lysine 539). Lysine 539 is covalently cross-linked (Glycyl lysine isopeptide (Lys-Gly) (interchain with G-Cter in SUMO2); alternate).

This sequence belongs to the OST1 family. As to quaternary structure, component of the oligosaccharyltransferase (OST) complex. OST exists in two different complex forms which contain common core subunits RPN1, RPN2, OST48, OST4, DAD1 and TMEM258, either STT3A or STT3B as catalytic subunits, and form-specific accessory subunits. STT3A complex assembly occurs through the formation of 3 subcomplexes. Subcomplex 1 contains RPN1 and TMEM258, subcomplex 2 contains the STT3A-specific subunits STT3A, DC2/OSTC, and KCP2 as well as the core subunit OST4, and subcomplex 3 contains RPN2, DAD1, and OST48. The STT3A complex can form stable complexes with the Sec61 complex or with both the Sec61 and TRAP complexes. Interacts with TMEM35A/NACHO. Post-translationally, ubiquitinated by the ECS(ASB11) complex. Ubiquitinated by RNF128, leading to degradation in a proteasome/lysosome-dependent manner. In terms of processing, ufmylated by UFL1 in response to endoplasmic reticulum stress, promoting reticulophagy of endoplasmic reticulum sheets.

It localises to the endoplasmic reticulum membrane. The protein operates within protein modification; protein glycosylation. Subunit of the oligosaccharyl transferase (OST) complex that catalyzes the initial transfer of a defined glycan (Glc(3)Man(9)GlcNAc(2) in eukaryotes) from the lipid carrier dolichol-pyrophosphate to an asparagine residue within an Asn-X-Ser/Thr consensus motif in nascent polypeptide chains, the first step in protein N-glycosylation. N-glycosylation occurs cotranslationally and the complex associates with the Sec61 complex at the channel-forming translocon complex that mediates protein translocation across the endoplasmic reticulum (ER). All subunits are required for a maximal enzyme activity. The polypeptide is Dolichyl-diphosphooligosaccharide--protein glycosyltransferase subunit 1 (Mus musculus (Mouse)).